The following is a 337-amino-acid chain: Porphobilinogen deaminase (337 aa).

The residue at position 254 (C254) is an S-(dipyrrolylmethanemethyl)cysteine.

The protein belongs to the HMBS family. It depends on dipyrromethane as a cofactor.

It carries out the reaction 4 porphobilinogen + H2O = hydroxymethylbilane + 4 NH4(+). The protein operates within porphyrin-containing compound metabolism; protoporphyrin-IX biosynthesis; coproporphyrinogen-III from 5-aminolevulinate: step 2/4. Its function is as follows. Tetrapolymerization of the monopyrrole PBG into the hydroxymethylbilane pre-uroporphyrinogen in several discrete steps. This is Porphobilinogen deaminase (pda-1) from Neurospora crassa (strain ATCC 24698 / 74-OR23-1A / CBS 708.71 / DSM 1257 / FGSC 987).